The sequence spans 144 residues: Actin-associated protein FAM107A (144 aa).

A coiled-coil region spans residues E66–K112. Positions R74–K84 match the Nuclear localization signal motif. The interval Q105 to F124 is disordered. A compositionally biased stretch (basic and acidic residues) spans K112–F124.

It belongs to the FAM107 family. Interacts with ACTB. Interacts with COMMD1; this interaction stabilizes COMMD1 in the nucleus. Interacts with MAP1A. Interacts with PRDX1. Interacts with F-actin. Widely expressed. Expressed in neurons. Expressed in malignant glial tumors. Expression is reduced or absent in a number of cancer cell lines.

Its subcellular location is the nucleus. The protein localises to the cytoplasm. It is found in the cytoskeleton. The protein resides in the stress fiber. It localises to the cell junction. Its subcellular location is the focal adhesion. The protein localises to the cell projection. It is found in the ruffle membrane. The protein resides in the synapse. In terms of biological role, stress-inducible actin-binding protein that plays a role in synaptic and cognitive functions by modulating actin filamentous (F-actin) dynamics. Mediates polymerization of globular actin to F-actin. Also binds to, stabilizes and bundles F-actin. Involved in synaptic function by regulating neurite outgrowth in an actin-dependent manner and for the acquisition of hippocampus-dependent cognitive function, such as learning and long-term memory. Plays a role in the actin and microtubule cytoskeleton organization; negatively regulates focal adhesion (FA) assembly promoting malignant glial cell migration in an actin-, microtubule- and MAP1A-dependent manner. Also involved in neuroblastoma G1/S phase cell cycle progression and cell proliferation inhibition by stimulating ubiquitination of NF-kappa-B subunit RELA and NF-kappa-B degradation in a COMMD1- and actin-dependent manner. May play a role in tumor development. This chain is Actin-associated protein FAM107A, found in Homo sapiens (Human).